Consider the following 286-residue polypeptide: Ferric acinetobactin reductase (286 aa).

The FAD-binding FR-type domain occupies 25 to 131 (MEQLEMTIVS…IGPRPHFIPN (107 aa)). FAD-binding residues include R79, V80, T82, D96, V98, H100, D102, S104, A106, R250, G252, and S255.

The protein belongs to the SIP oxidoreductase family. In terms of assembly, monomer in solution. Requires FAD as cofactor.

It carries out the reaction 2 a Fe(II)-siderophore + NAD(+) + H(+) = 2 a Fe(III)-siderophore + NADH. The enzyme catalyses 2 a Fe(II)-siderophore + NADP(+) + H(+) = 2 a Fe(III)-siderophore + NADPH. Its function is as follows. Ferric-siderophore reductase involved in iron removal from the siderophores after their transport into the cell. Interacts with the siderophores acinetobactin (Acb) and preacinetobactin (pre-Acb) and catalyzes the reduction of the ferric iron bound to the siderophores to ferrous iron, resulting in destabilization of the siderophore chelation complex and entrance of ferrous iron into the intracellular pool of bioavailable metals. Can use NADH and NADPH as electron donors in vitro, but the reduction rate is very slow, suggesting that NADH and NADPH are not the physiological partners of BauF. This chain is Ferric acinetobactin reductase, found in Acinetobacter baumannii.